Here is a 1653-residue protein sequence, read N- to C-terminus: Protein TOPAZ1 (1653 aa).

Disordered stretches follow at residues 1–94 (MRPP…TDLV), 284–303 (YSVEENNTGRKHRKKMKSGK), and 415–442 (ISSTVKSPSDGHHMEKRSPRGDLRSETE). A compositionally biased stretch (basic and acidic residues) spans 63-78 (GREETEGDKLAKENGK). The segment covering 423-442 (SDGHHMEKRSPRGDLRSETE) has biased composition (basic and acidic residues).

As to expression, restricted to testis, where it localizes to germ cells.

It is found in the cytoplasm. Its subcellular location is the cytosol. Its function is as follows. Important for normal spermatogenesis and male fertility. Specifically required for progression to the post-meiotic stages of spermatocyte development. Seems to be necessary for normal expression levels of a number of testis-expressed gene transcripts, although its role in this process is unclear. This Mus musculus (Mouse) protein is Protein TOPAZ1.